A 149-amino-acid polypeptide reads, in one-letter code: Sex-regulated protein janus-A (149 aa).

A substrate-binding site is contributed by Lys-46. The Proton acceptor role is filled by His-77. 118–120 contributes to the substrate binding site; the sequence is STG.

Belongs to the janus family.

In terms of biological role, janA and janB regulate somatic sex differentiation. This Drosophila pseudoobscura pseudoobscura (Fruit fly) protein is Sex-regulated protein janus-A (janA).